We begin with the raw amino-acid sequence, 346 residues long: Putative aminopeptidase YhfE (346 aa).

Residues H68 and D185 each coordinate a divalent metal cation. E219 (proton acceptor) is an active-site residue. 3 residues coordinate a divalent metal cation: E220, D240, and H320.

It belongs to the peptidase M42 family. Requires a divalent metal cation as cofactor.

The protein is Putative aminopeptidase YhfE (yhfE) of Bacillus subtilis (strain 168).